Reading from the N-terminus, the 353-residue chain is 3-dehydroquinate synthase (353 aa).

NAD(+)-binding positions include 60–65 (AGDMNK), 94–98 (GMITD), 118–119 (TT), lysine 131, and lysine 140. Zn(2+) contacts are provided by glutamate 173, histidine 234, and histidine 253.

This sequence belongs to the sugar phosphate cyclases superfamily. Dehydroquinate synthase family. Requires NAD(+) as cofactor. Co(2+) is required as a cofactor. It depends on Zn(2+) as a cofactor.

It localises to the cytoplasm. It catalyses the reaction 7-phospho-2-dehydro-3-deoxy-D-arabino-heptonate = 3-dehydroquinate + phosphate. It participates in metabolic intermediate biosynthesis; chorismate biosynthesis; chorismate from D-erythrose 4-phosphate and phosphoenolpyruvate: step 2/7. Catalyzes the conversion of 3-deoxy-D-arabino-heptulosonate 7-phosphate (DAHP) to dehydroquinate (DHQ). The protein is 3-dehydroquinate synthase of Parabacteroides distasonis (strain ATCC 8503 / DSM 20701 / CIP 104284 / JCM 5825 / NCTC 11152).